Consider the following 219-residue polypeptide: Ribosomal RNA small subunit methyltransferase G (219 aa).

Residues Gly-78, Phe-83, 129–130 (GE), and Arg-146 each bind S-adenosyl-L-methionine.

Belongs to the methyltransferase superfamily. RNA methyltransferase RsmG family.

The protein localises to the cytoplasm. The enzyme catalyses guanosine(527) in 16S rRNA + S-adenosyl-L-methionine = N(7)-methylguanosine(527) in 16S rRNA + S-adenosyl-L-homocysteine. Functionally, specifically methylates the N7 position of guanine in position 527 of 16S rRNA. This chain is Ribosomal RNA small subunit methyltransferase G, found in Geotalea uraniireducens (strain Rf4) (Geobacter uraniireducens).